Here is a 268-residue protein sequence, read N- to C-terminus: Microtubule-associated protein RP/EB family member 1 (268 aa).

Ala2 is subject to N-acetylalanine. The Calponin-homology (CH) domain maps to 14 to 116 (NLSRHDMLAW…FVQWFKKFFD (103 aa)). Lys66 is subject to N6-crotonyllysine. A Phosphotyrosine modification is found at Tyr124. The segment at 124–268 (YDPVAARQGQ…GGPQEEQEEY (145 aa)) is interaction with MTUS2/TIP150. A compositionally biased stretch (low complexity) spans 147 to 160 (NKPKKPLSSSSAAP). A disordered region spans residues 147-184 (NKPKKPLSSSSAAPQRPITTHRTTATPKAGPGVVRKNP). Ser155 is subject to Phosphoserine. Polar residues predominate over residues 163–172 (PITTHRTTAT). An EB1 C-terminal domain is found at 185 to 255 (GVGNGDDEAA…LYATDEGFVI (71 aa)). Residues 185 to 268 (GVGNGDDEAA…GGPQEEQEEY (84 aa)) are interaction with CDK5RAP2. The tract at residues 206–211 (TVEDLE) is interaction with APC. The interval 208 to 268 (EDLEKERDFY…GGPQEEQEEY (61 aa)) is DCTN1-binding. Lys220 is subject to N6-acetyllysine. Residues 220–242 (KLRNIELICQENEGENNPVLQRI) form an APC-binding region. The interaction with SKA1 stretch occupies residues 232-255 (EGENNPVLQRIVDILYATDEGFVI).

The protein belongs to the MAPRE family. As to quaternary structure, homodimer. Heterodimer with MAPRE3. Interacts with DCTN1, DCTN2, TERF1 and dynein intermediate chain. Interaction with DIAPH1 and DIAPH2. Interacts (via C-terminal residues 206-211) with APC (via C-terminal residues 2674-2845); the interaction inhibits association with and bundling of F-actin. Interacts with CLASP2, DST, KIF2C and STIM1; probably required for their targeting to the growing microtubule plus ends. Interacts with MTUS2; interaction is direct and probably targets MTUS2 to microtubules. Interacts (via C-terminus) with SKA1 (via SXIP motif); the interaction is direct and stabilizes the kinetochore-microtubule attachment of the SKA1 complex. Interacts with APC2. Interacts with CLASP1. Interacts with CDK5RAP2. Interacts with MACF1. Interacts with RABL2/RABL2A; binds preferentially to GTP-bound RABL2. Interacts with KCNAB2. Interacts (via C-terminus) with CLIP1. Interacts with SLAIN2 and SLAIN1. Interacts with KIF18B; this interaction is required for efficient accumulation of KIF18B at microtubule plus ends. Interacts with MISP. Interacts with KNSTRN. Interacts with NCKAP5L. Interacts with CAMSAP2. Interacts with PDE4DIP isoform 13/MMG8/SMYLE; this interaction is required for its recruitment to the Golgi apparatus. Forms a pericentrosomal complex with AKAP9, CDK5RAP2 and PDE4DIP isoform 13/MMG8/SMYLE; within this complex, MAPRE1 binding to CDK5RAP2 may be mediated by PDE4DIP. Interacts with AKNA. Interacts with GAS2L1, GAS2L2, and GAS2L3. Acetylation at Lys-220 by KAT2B/PCAF promotes dynamic kinetochore-microtubule interactions in early mitosis. Post-translationally, crotonylated by KAT5 during mitosis, promoting astral microtubule plasticity and dynamic connection between astral microtubules and the cortex during mitotic chromosome segregation, thereby ensuring accurate spindle positioning in mitosis. Decrotonylated by HDAC3.

Its subcellular location is the cytoplasm. It localises to the cytoskeleton. The protein localises to the microtubule organizing center. It is found in the centrosome. The protein resides in the golgi apparatus. Its subcellular location is the spindle. It localises to the spindle pole. Its function is as follows. Plus-end tracking protein (+TIP) that binds to the plus-end of microtubules and regulates the dynamics of the microtubule cytoskeleton. Recruits other +TIP proteins to microtubules by binding to a conserved Ser-X-Leu-Pro (SXLP) motif in their polypeptide chains. Promotes cytoplasmic microtubule nucleation and elongation. Involved in mitotic spindle positioning by stabilizing microtubules and promoting dynamic connection between astral microtubules and the cortex during mitotic chromosome segregation. Assists chromosome alignment in metaphase by recruiting the SKA complex to the spindle and stabilizing its interactions with microtubule bundles (K-fibers). Also acts as a regulator of minus-end microtubule organization: interacts with the complex formed by AKAP9 and PDE4DIP, leading to recruit CAMSAP2 to the Golgi apparatus, thereby tethering non-centrosomal minus-end microtubules to the Golgi, an important step for polarized cell movement. Promotes elongation of CAMSAP2-decorated microtubule stretches on the minus-end of microtubules. Acts as a regulator of autophagosome transport via interaction with CAMSAP2. Functions downstream of Rho GTPases and DIAPH1 in stable microtubule formation. May play a role in cell migration. The sequence is that of Microtubule-associated protein RP/EB family member 1 (MAPRE1) from Bos taurus (Bovine).